The following is a 314-amino-acid chain: Oxaloacetate tautomerase FAHD2B, mitochondrial (314 aa).

Residues methionine 1–leucine 84 constitute a mitochondrion transit peptide. Residues glutamate 159, glutamate 161, and aspartate 190 each coordinate Mg(2+). Lysine 203 is subject to N6-acetyllysine; alternate. Position 203 is an N6-succinyllysine; alternate (lysine 203). Lysine 234 carries the post-translational modification N6-acetyllysine.

The protein belongs to the FAH family. Mg(2+) is required as a cofactor. Mn(2+) serves as cofactor.

The protein localises to the mitochondrion. It catalyses the reaction oxaloacetate = enol-oxaloacetate. Its function is as follows. Tautomerase that converts enol-oxaloacetate, a strong inhibitor of succinate dehydrogenase, to the physiological keto form of oxaloacetate. It is thereby required to maximize aerobic respiration efficiency by preventing succinate dehydrogenase inhibition. This Bos taurus (Bovine) protein is Oxaloacetate tautomerase FAHD2B, mitochondrial.